A 428-amino-acid polypeptide reads, in one-letter code: 3-phosphoshikimate 1-carboxyvinyltransferase (428 aa).

3-phosphoshikimate contacts are provided by K23, S24, and R28. Position 23 (K23) interacts with phosphoenolpyruvate. Phosphoenolpyruvate is bound by residues G97 and R125. S170, S171, Q172, S198, D314, N338, and K342 together coordinate 3-phosphoshikimate. A phosphoenolpyruvate-binding site is contributed by Q172. Residue D314 is the Proton acceptor of the active site. Residues R346, R388, and K413 each coordinate phosphoenolpyruvate.

The protein belongs to the EPSP synthase family. In terms of assembly, monomer.

The protein resides in the cytoplasm. It carries out the reaction 3-phosphoshikimate + phosphoenolpyruvate = 5-O-(1-carboxyvinyl)-3-phosphoshikimate + phosphate. The protein operates within metabolic intermediate biosynthesis; chorismate biosynthesis; chorismate from D-erythrose 4-phosphate and phosphoenolpyruvate: step 6/7. Its function is as follows. Catalyzes the transfer of the enolpyruvyl moiety of phosphoenolpyruvate (PEP) to the 5-hydroxyl of shikimate-3-phosphate (S3P) to produce enolpyruvyl shikimate-3-phosphate and inorganic phosphate. This is 3-phosphoshikimate 1-carboxyvinyltransferase from Baumannia cicadellinicola subsp. Homalodisca coagulata.